We begin with the raw amino-acid sequence, 170 residues long: Calcineurin subunit B type 2 (170 aa).

EF-hand domains are found at residues 18–46 (DEIR…FMSL), 50–85 (QQNP…FSVK), 87–122 (DKLS…MVGN), and 128–163 (QLQQ…TDIH). Ca(2+) contacts are provided by Asp-31, Asp-33, Ser-35, Glu-42, Asp-63, Asp-65, Asn-67, Glu-69, Glu-74, Asp-100, Asp-102, Asp-104, Tyr-106, Glu-111, Asp-141, Asp-143, Asp-145, Lys-147, and Glu-152. The residue at position 35 (Ser-35) is a Phosphoserine.

This sequence belongs to the calcineurin regulatory subunit family. Composed of a catalytic subunit (A) and a regulatory subunit (B). Interacts with sra.

Functionally, calcineurin is a calcium-binding and calmodulin-binding protein found in all cells from yeast to mammals, and a calcium-dependent, calmodulin-stimulated protein phosphatase. This is Calcineurin subunit B type 2 (CanB2) from Drosophila melanogaster (Fruit fly).